The sequence spans 516 residues: Phosphatidylserine decarboxylase proenzyme 2, mitochondrial (516 aa).

The N-terminal 21 residues, 1–21 (MRPRQRFRRFHPRWSKVNLRG), are a transit peptide targeting the mitochondrion. Residues 22 to 33 (FGGVGALKGVKA) lie on the Mitochondrial matrix side of the membrane. A helical membrane pass occupies residues 34–52 (LNGMNVRVSMRLKWISNRI). Topologically, residues 53-516 (HRIRRSRRLG…GQYVRVGEAL (464 aa)) are mitochondrial intermembrane. Residues aspartate 159, histidine 373, and serine 488 each act as charge relay system; for autoendoproteolytic cleavage activity in the active site. Serine 488 acts as the Schiff-base intermediate with substrate; via pyruvic acid; for decarboxylase activity in catalysis. Serine 488 bears the Pyruvic acid (Ser); by autocatalysis mark.

It belongs to the phosphatidylserine decarboxylase family. PSD-B subfamily. Eukaryotic type I sub-subfamily. Heterodimer of a large membrane-associated beta subunit and a small pyruvoyl-containing alpha subunit. It depends on pyruvate as a cofactor. Is synthesized initially as an inactive proenzyme. Formation of the active enzyme involves a self-maturation process in which the active site pyruvoyl group is generated from an internal serine residue via an autocatalytic post-translational modification. Two non-identical subunits are generated from the proenzyme in this reaction, and the pyruvate is formed at the N-terminus of the alpha chain, which is derived from the carboxyl end of the proenzyme. The autoendoproteolytic cleavage occurs by a canonical serine protease mechanism, in which the side chain hydroxyl group of the serine supplies its oxygen atom to form the C-terminus of the beta chain, while the remainder of the serine residue undergoes an oxidative deamination to produce ammonia and the pyruvoyl prosthetic group on the alpha chain. During this reaction, the Ser that is part of the protease active site of the proenzyme becomes the pyruvoyl prosthetic group, which constitutes an essential element of the active site of the mature decarboxylase.

The protein localises to the mitochondrion. Its subcellular location is the mitochondrion inner membrane. It is found in the nucleus envelope. It localises to the lipid droplet. The protein resides in the endoplasmic reticulum membrane. The catalysed reaction is a 1,2-diacyl-sn-glycero-3-phospho-L-serine + H(+) = a 1,2-diacyl-sn-glycero-3-phosphoethanolamine + CO2. Its pathway is phospholipid metabolism; phosphatidylethanolamine biosynthesis; phosphatidylethanolamine from CDP-diacylglycerol: step 2/2. In terms of biological role, catalyzes the formation of phosphatidylethanolamine (PtdEtn) from phosphatidylserine (PtdSer). Plays a central role in phospholipid metabolism and in the interorganelle trafficking of phosphatidylserine. Together with psd1 and psd3, responsible for the majority of phosphatidylethanolamine synthesis. Plays a role in lipid droplet biogenesis at the endoplasmic reticulum membrane. This Schizosaccharomyces pombe (strain 972 / ATCC 24843) (Fission yeast) protein is Phosphatidylserine decarboxylase proenzyme 2, mitochondrial.